We begin with the raw amino-acid sequence, 710 residues long: Probable threonine--tRNA ligase 1, cytoplasmic (710 aa).

Residues M1–V35 are disordered. Basic and acidic residues predominate over residues P18–P33. The 66-residue stretch at K72–K137 folds into the TGS domain.

Belongs to the class-II aminoacyl-tRNA synthetase family.

Its subcellular location is the cytoplasm. The catalysed reaction is tRNA(Thr) + L-threonine + ATP = L-threonyl-tRNA(Thr) + AMP + diphosphate + H(+). In Dictyostelium discoideum (Social amoeba), this protein is Probable threonine--tRNA ligase 1, cytoplasmic (thrS1).